We begin with the raw amino-acid sequence, 512 residues long: Respiratory nitrate reductase 1 beta chain (512 aa).

3 consecutive 4Fe-4S ferredoxin-type domains span residues 7–35 (VGMVLNLDKCIGCHTCSVTCKNVWTSREG), 175–206 (TFMMYLPRLCEHCLNPACVATCPSGAIYKREE), and 208–237 (GIVLIDQDKCRGWRMCITGCPYKKIYFNWK). [4Fe-4S] cluster is bound by residues Cys-16, Cys-19, Cys-22, Cys-26, Cys-184, Cys-187, and Cys-192. Positions 196, 217, and 223 each coordinate [3Fe-4S] cluster. [4Fe-4S] cluster-binding residues include Cys-227, Cys-244, Cys-247, Cys-259, and Cys-263.

In terms of assembly, dimer of heterotrimers each composed of an alpha, a beta and a gamma chain. Alpha and beta are catalytic chains; gamma chains are involved in binding the enzyme complex to the cytoplasmic membrane. [4Fe-4S] cluster is required as a cofactor. Requires [3Fe-4S] cluster as cofactor.

The protein localises to the cell membrane. The catalysed reaction is nitrate + a quinol = a quinone + nitrite + H2O. The nitrate reductase enzyme complex allows S.flexneri to use nitrate as an electron acceptor during anaerobic growth. The beta chain is an electron transfer unit containing four cysteine clusters involved in the formation of iron-sulfur centers. Electrons are transferred from the gamma chain to the molybdenum cofactor of the alpha subunit. The polypeptide is Respiratory nitrate reductase 1 beta chain (narH) (Shigella flexneri).